Consider the following 437-residue polypeptide: MQLPRWWELGDPCAWTGQGRGTRRMSPATTGTFLLTVYTIFSKVHSDRNVYPSAGVLFVHVLEREYFKGEFPPYPKPGEISNDPITFNTNLMGYPDRPGWLRYIQRTPYSDGVLYGSPTAENVGKPTIIEITAYNRRTFETARHNLIINIMSAEDFPLPYQAEFFIKNMNVEEMLASEVLGDFLGAVKNVWQPERLNAINITSALDRGGRVPLPINDLKEGVYVMVGADVPFSSCLREVENPQNQLRCSQEMEPVITCDKKFRTQFYIDWCKISLVDKTKQVSTYQEVIRGEGILPDGGEYKPPSDSLKSRDYYTDFLITLAVPSAVALVLFLILAYIMCCRREGVEKRNMQTPDIQLVHHSAIQKSTKELRDMSKNREIAWPLSTLPVFHPVTGEIIPPLHTDNYDSTNMPLMQTQQNLPHQTQIPQQQTTGKWYP.

Residues 1–317 (MQLPRWWELG…LKSRDYYTDF (317 aa)) are Extracellular-facing. Residue asparagine 200 is glycosylated (N-linked (GlcNAc...) asparagine). The helical transmembrane segment at 318–338 (LITLAVPSAVALVLFLILAYI) threads the bilayer. Topologically, residues 339–437 (MCCRREGVEK…QQQTTGKWYP (99 aa)) are cytoplasmic.

The protein belongs to the sarcoglycan alpha/epsilon family. In terms of processing, N-glycosylated. Post-translationally, ubiquitinated, leading to its degradation by the proteasome.

It is found in the cell membrane. The protein resides in the sarcolemma. It localises to the cytoplasm. The protein localises to the cytoskeleton. Its subcellular location is the cell projection. It is found in the dendrite. The protein resides in the golgi apparatus. Functionally, component of the sarcoglycan complex, a subcomplex of the dystrophin-glycoprotein complex which forms a link between the F-actin cytoskeleton and the extracellular matrix. This chain is Epsilon-sarcoglycan, found in Macaca fascicularis (Crab-eating macaque).